The sequence spans 261 residues: UPF0246 protein Daci_5283 (261 aa).

This sequence belongs to the UPF0246 family.

The chain is UPF0246 protein Daci_5283 from Delftia acidovorans (strain DSM 14801 / SPH-1).